The following is a 313-amino-acid chain: MALRICVTYTPALPIGLCTRCCLCLEQSPSWCHCLRGVSFLTFHLHQSVPLGDRDSLLMFTRQAGHFVEGSKAGRSRGRLCLSQALRVAVRGAFVSLWFAAGAGDRERNKGDKGAQTGAGLSQEAEDVDVSRARRVTDAPQGTLCGTGNRNSGSQSARVVGVAHLGEAFRVGVEQAISSCPEEVHGRHGLSMEIMWARMDVALRSPGRGLLAGAGALCMTLAESSCPDYERGRRACLTLHRHPTPHCSTWGLPLRVAGSWLTVVTVEALGGWRMGVRRTGQVGPTMHPPPVSGASPLLLHHLLLLLLIIILTC.

Residues 107 to 129 (ERNKGDKGAQTGAGLSQEAEDVD) are disordered.

The protein is Myeloma-overexpressed gene protein (MYEOV) of Homo sapiens (Human).